The chain runs to 376 residues: Peroxisomal targeting signal 2 receptor (376 aa).

WD repeat units follow at residues 58–98 (DTQD…YPVM), 102–142 (EHQR…NTSL), 182–222 (DNND…PLFM), 226–267 (AHNG…PNVH), 279–319 (GHEF…TSRV), and 339–376 (AHTEFVMGCDWSLWGEPGWVVTTGWDEMVYVWNTQRLQ).

It belongs to the WD repeat peroxin-7 family. As to quaternary structure, interacts with PEX20. Post-translationally, polyubiquitinated, leading to its degradation by the proteasome. Ubiquitination is dependent of PEX5 and PEX20 and takes place following recycling into the cytosol.

It localises to the cytoplasm. Its subcellular location is the cytosol. The protein resides in the peroxisome matrix. Receptor required for the peroxisomal import of proteins containing a C-terminal PTS2-type peroxisomal targeting signal, such as 3-oxoacyl-CoA thiolase. Specifically binds to cargo proteins containing a PTS2 peroxisomal targeting signal in the cytosol. Cargo protein-binding triggers interaction with PEX20 and formation of a ternary complex composed of PEX20 and PEX7 along with PTS2-containing cargo proteins, which is tranlocated into peroxisomes by passing through the peroxisomal docking complex. PEX7 receptor is then retrotranslocated into the cytosol, where it is ubiquitinated and degraded. This is Peroxisomal targeting signal 2 receptor from Komagataella phaffii (strain GS115 / ATCC 20864) (Yeast).